We begin with the raw amino-acid sequence, 82 residues long: Conotoxin Cal30 (82 aa).

Positions 1 to 19 are cleaved as a signal peptide; it reads MEKLIILLLVASLLVTTDS.

In terms of processing, may contain 5 disulfide bonds. As to expression, expressed by the venom duct.

The protein resides in the secreted. Probable neurotoxin. The polypeptide is Conotoxin Cal30 (Californiconus californicus (California cone)).